A 163-amino-acid polypeptide reads, in one-letter code: MASTSSFDIVSDFDRQELVNAIDQAEREIKARYDLKDSNTSLELGEDTITINTSSQFSLDAVHTVLQTKAAKRNLSLKIFDFGKVESASGNRVRQEVKLQKGISQENAKKITKLIKDEFKKVQSSIQGDAVRVSAKSKDELQAVMQRLKAEDFPMPLQFTNYR.

Belongs to the YajQ family.

Functionally, nucleotide-binding protein. The protein is Nucleotide-binding protein Tery_2743 of Trichodesmium erythraeum (strain IMS101).